The following is a 297-amino-acid chain: Homoserine kinase (297 aa).

82 to 92 contributes to the ATP binding site; that stretch reads PLTRGLGSSAS.

It belongs to the GHMP kinase family. Homoserine kinase subfamily.

The protein resides in the cytoplasm. The catalysed reaction is L-homoserine + ATP = O-phospho-L-homoserine + ADP + H(+). It functions in the pathway amino-acid biosynthesis; L-threonine biosynthesis; L-threonine from L-aspartate: step 4/5. In terms of biological role, catalyzes the ATP-dependent phosphorylation of L-homoserine to L-homoserine phosphate. This is Homoserine kinase from Bacillus anthracis (strain CDC 684 / NRRL 3495).